The sequence spans 225 residues: Histone H1 (225 aa).

Positions 1 to 20 (MGPKATSGTRGRGKKVGTKT) are disordered. The region spanning 23 to 94 (PLPKYKDLIV…GPAGSIKLLK (72 aa)) is the H15 domain. The tract at residues 95 to 147 (KAAQPKPEEAKRAAKPAKRVVKAAKPAKAKPAKAAKAAKPAKPVKAAKAASAV) is disordered. Basic residues predominate over residues 107-127 (AAKPAKRVVKAAKPAKAKPAK). The segment covering 128–147 (AAKAAKPAKPVKAAKAASAV) has biased composition (low complexity).

It belongs to the histone H1/H5 family.

The protein resides in the nucleus. It is found in the chromosome. In terms of biological role, could act as an H1-type linker histone. The protein is Histone H1 (HHOA) of Eremothecium gossypii (strain ATCC 10895 / CBS 109.51 / FGSC 9923 / NRRL Y-1056) (Yeast).